Here is a 920-residue protein sequence, read N- to C-terminus: Plasma membrane ATPase (920 aa).

The tract at residues 1–77 (MADHSASGAP…TPGGGRVVPE (77 aa)) is disordered. Residues 1–115 (MADHSASGAP…KEEKENHFLK (115 aa)) lie on the Cytoplasmic side of the membrane. The span at 38–51 (EDDEDEDIDALIED) shows a compositional bias: acidic residues. Residues 116–138 (FLGFFVGPIQFVMEGAAVLAAGL) form a helical membrane-spanning segment. Residues 139 to 140 (ED) lie on the Extracellular side of the membrane. Residues 141-160 (WVDFGVICGLLLLNAVVGFV) form a helical membrane-spanning segment. Topologically, residues 161 to 291 (QEFQAGSIVD…GSGHFTEVLN (131 aa)) are cytoplasmic. The chain crosses the membrane as a helical span at residues 292-314 (GIGTILLILVIFTLLIVWVSSFY). The Extracellular portion of the chain corresponds to 315-321 (RSNPIVQ). Residues 322–354 (ILEFTLAITIIGVPVGLPAVVTTTMAVGAAYLA) form a helical membrane-spanning segment. Residues 355–687 (KKKAIVQKLS…LKTSRQIFHR (333 aa)) lie on the Cytoplasmic side of the membrane. D378 (4-aspartylphosphate intermediate) is an active-site residue. Mg(2+) is bound by residues D634 and D638. Residues 688-713 (MYAYVVYRIALSIHLEIFLGLWIAIL) traverse the membrane as a helical segment. At 714–720 (NRSLNIE) the chain is on the extracellular side. The helical transmembrane segment at 721–738 (LVVFIAIFADVATLAIAY) threads the bilayer. Over 739–754 (DNAPYSQTPVKWNLPK) the chain is Cytoplasmic. A helical transmembrane segment spans residues 755–779 (LWGMSVLLGVVLAVGTWITVTTMYA). Topologically, residues 780–806 (QGENGGIVQNFGNMDEVLFLQISLTEN) are extracellular. 2 consecutive transmembrane segments (helical) span residues 807-826 (WLIF…PSWQ) and 827-847 (LSGA…WGWF). Residues 848–853 (EHSDTS) are Extracellular-facing. The helical transmembrane segment at 854–878 (IVAVVRIWIFSFGIFCIMGGVYYIL) threads the bilayer. The Cytoplasmic segment spans residues 879 to 920 (QDSVGFDNLMHGKSPKGNQKQRSLEDFVVSLQRVSTQHEKSQ).

This sequence belongs to the cation transport ATPase (P-type) (TC 3.A.3) family. Type IIIA subfamily.

It is found in the cell membrane. It catalyses the reaction ATP + H2O + H(+)(in) = ADP + phosphate + 2 H(+)(out). Functionally, the plasma membrane ATPase of plants and fungi is a hydrogen ion pump. The proton gradient it generates drives the active transport of nutrients by H(+)-symport. The resulting external acidification and/or internal alkinization may mediate growth responses. This is Plasma membrane ATPase (pma-1) from Neurospora crassa (strain ATCC 24698 / 74-OR23-1A / CBS 708.71 / DSM 1257 / FGSC 987).